The primary structure comprises 610 residues: Chaperone protein DnaK (610 aa).

Threonine 173 is subject to Phosphothreonine; by autocatalysis. Low complexity predominate over residues 579-592 (QQQQAQGANAGQNN). The tract at residues 579–610 (QQQQAQGANAGQNNDSTVEDAEFKEVKDDDKK) is disordered. Basic and acidic residues predominate over residues 599–610 (AEFKEVKDDDKK).

Belongs to the heat shock protein 70 family.

Acts as a chaperone. This chain is Chaperone protein DnaK, found in Staphylococcus aureus (strain bovine RF122 / ET3-1).